Consider the following 408-residue polypeptide: S-adenosylmethionine synthase (408 aa).

H16 is a binding site for ATP. Residue D18 participates in Mg(2+) binding. E44 serves as a coordination point for K(+). Residues E57 and Q100 each contribute to the L-methionine site. Residues 100–110 are flexible loop; that stretch reads QSPEINQGVSR. ATP-binding positions include 177–179, D257, 263–264, A280, and K284; these read DGK and RK. Residue D257 coordinates L-methionine. K288 is an L-methionine binding site.

This sequence belongs to the AdoMet synthase family. As to quaternary structure, homotetramer; dimer of dimers. Mg(2+) is required as a cofactor. K(+) serves as cofactor.

It is found in the cytoplasm. It catalyses the reaction L-methionine + ATP + H2O = S-adenosyl-L-methionine + phosphate + diphosphate. It participates in amino-acid biosynthesis; S-adenosyl-L-methionine biosynthesis; S-adenosyl-L-methionine from L-methionine: step 1/1. Its function is as follows. Catalyzes the formation of S-adenosylmethionine (AdoMet) from methionine and ATP. The overall synthetic reaction is composed of two sequential steps, AdoMet formation and the subsequent tripolyphosphate hydrolysis which occurs prior to release of AdoMet from the enzyme. The polypeptide is S-adenosylmethionine synthase (Bifidobacterium animalis subsp. lactis (strain AD011)).